The chain runs to 619 residues: Dihydroxy-acid dehydratase (619 aa).

D81 is a Mg(2+) binding site. [2Fe-2S] cluster is bound at residue C122. Mg(2+)-binding residues include D123 and K124. Position 124 is an N6-carboxylysine (K124). C201 serves as a coordination point for [2Fe-2S] cluster. Residue E496 coordinates Mg(2+). S522 acts as the Proton acceptor in catalysis.

It belongs to the IlvD/Edd family. As to quaternary structure, homodimer. [2Fe-2S] cluster is required as a cofactor. Mg(2+) serves as cofactor.

It carries out the reaction (2R)-2,3-dihydroxy-3-methylbutanoate = 3-methyl-2-oxobutanoate + H2O. It catalyses the reaction (2R,3R)-2,3-dihydroxy-3-methylpentanoate = (S)-3-methyl-2-oxopentanoate + H2O. It participates in amino-acid biosynthesis; L-isoleucine biosynthesis; L-isoleucine from 2-oxobutanoate: step 3/4. It functions in the pathway amino-acid biosynthesis; L-valine biosynthesis; L-valine from pyruvate: step 3/4. Functions in the biosynthesis of branched-chain amino acids. Catalyzes the dehydration of (2R,3R)-2,3-dihydroxy-3-methylpentanoate (2,3-dihydroxy-3-methylvalerate) into 2-oxo-3-methylpentanoate (2-oxo-3-methylvalerate) and of (2R)-2,3-dihydroxy-3-methylbutanoate (2,3-dihydroxyisovalerate) into 2-oxo-3-methylbutanoate (2-oxoisovalerate), the penultimate precursor to L-isoleucine and L-valine, respectively. This is Dihydroxy-acid dehydratase from Paracidovorax citrulli (strain AAC00-1) (Acidovorax citrulli).